We begin with the raw amino-acid sequence, 151 residues long: SsrA-binding protein (151 aa).

Belongs to the SmpB family.

It is found in the cytoplasm. Its function is as follows. Required for rescue of stalled ribosomes mediated by trans-translation. Binds to transfer-messenger RNA (tmRNA), required for stable association of tmRNA with ribosomes. tmRNA and SmpB together mimic tRNA shape, replacing the anticodon stem-loop with SmpB. tmRNA is encoded by the ssrA gene; the 2 termini fold to resemble tRNA(Ala) and it encodes a 'tag peptide', a short internal open reading frame. During trans-translation Ala-aminoacylated tmRNA acts like a tRNA, entering the A-site of stalled ribosomes, displacing the stalled mRNA. The ribosome then switches to translate the ORF on the tmRNA; the nascent peptide is terminated with the 'tag peptide' encoded by the tmRNA and targeted for degradation. The ribosome is freed to recommence translation, which seems to be the essential function of trans-translation. In Campylobacter fetus subsp. fetus (strain 82-40), this protein is SsrA-binding protein.